The following is a 222-amino-acid chain: Putative adhesin RP828 (222 aa).

The signal sequence occupies residues 1-22; it reads MKKLLLIATASATILSSSVSFA.

Its function is as follows. Adheres to biotinylated epithelial (Vero cell) proteins. The protein is Putative adhesin RP828 of Rickettsia prowazekii (strain Madrid E).